The primary structure comprises 2472 residues: Centrosomal protein of 290 kDa (2472 aa).

The segment at 1 to 689 (MPPNIKWKEL…MESKNAEGIF (689 aa)) is self-association (with itself or C-terminus). Coiled coils occupy residues 59–747 (MKMK…LRQS), 1129–1392 (RQRI…QQSK), and 1459–1492 (QVIL…ILSR). The disordered stretch occupies residues 128–164 (DRELEDMEKELDKEKKVNEQLALRNEEAENENSKLRR). A compositionally biased stretch (basic and acidic residues) spans 137–164 (ELDKEKKVNEQLALRNEEAENENSKLRR). The interaction with IQCB1 stretch occupies residues 690–890 (DASLHLKAQV…TVLQVNEKSL (201 aa)). Disordered stretches follow at residues 1691–1713 (AHKD…SRAP) and 2451–2472 (PSPL…FPIY). Residues 1697 to 1713 (SLKSELQAQKEANSRAP) show a composition bias toward polar residues. The interval 1960–2472 (TTGMTVDQVL…GESPHSFPIY (513 aa)) is self-association (with itself or N-terminus).

Part of the tectonic-like complex (also named B9 complex). Interacts with ATF4 via its N-terminal region. Associates with the BBSome complex, interacting (via N-terminus) with BBS4. Interacts with IQCB1/NPHP5; IQCB1 and CEP290/NPHP6 are proposed to form a functional NPHP5-6 module localized to the centrosome. Interacts with NPHP4; the interaction likely requires additional interactors. Interacts with ZNF423, FAM161A, CEP162, CEP162, CEP131, TALPID3, CCDC13, CC2D2A, RPGRIP1. Can self-associate (homo- or heteromeric). Interacts with CCP110; required for suppressing cilia formation. Interacts with RPGR. Associates (via C-terminus) with microtubules; association to microtubule is reduced in response to cellular stress, such as ultraviolet light (UV) radiation or heat shock, in a process that requires p38 MAP kinase signaling. Interacts with FAM161A. Interacts with PCM1. Interacts with CCDC66. Interacts with ARMC9 and CSPP1. Ubiquitinated. May undergo monoubiquitination; monoubiquitination is inhibited in response to cellular stress, such as ultraviolet light (UV) radiation or heat shock, but does not cause its displacement from centriolar satellites. In terms of tissue distribution, expressed in multiple organs during early postnatal development, with highest levels in hindbrain.

The protein localises to the cytoplasm. It is found in the cytoskeleton. Its subcellular location is the microtubule organizing center. The protein resides in the centrosome. It localises to the centriolar satellite. The protein localises to the nucleus. It is found in the centriole. Its subcellular location is the cell projection. The protein resides in the cilium. It localises to the cilium basal body. The protein localises to the cytoplasmic vesicle. Its function is as follows. Involved in early and late steps in cilia formation. Its association with CCP110 is required for inhibition of primary cilia formation by CCP110. May play a role in early ciliogenesis in the disappearance of centriolar satellites and in the transition of primary ciliar vesicles (PCVs) to capped ciliary vesicles (CCVs). Required for the centrosomal recruitment of RAB8A and for the targeting of centriole satellite proteins to centrosomes such as of PCM1. Required for the correct localization of ciliary and phototransduction proteins in retinal photoreceptor cells; may play a role in ciliary transport processes. Required for efficient recruitment of RAB8A to primary cilium. In the ciliary transition zone is part of the tectonic-like complex (also named B9 complex) which is required for tissue-specific ciliogenesis and may regulate ciliary membrane composition. Involved in regulation of the BBSome complex integrity, specifically for presence of BBS2, BBS5 and BBS8/TTC8 in the complex, and in ciliary targeting of selected BBSome cargos. May play a role in controlling entry of the BBSome complex to cilia possibly implicating IQCB1/NPHP5. Activates ATF4-mediated transcription. In Mus musculus (Mouse), this protein is Centrosomal protein of 290 kDa.